A 60-amino-acid polypeptide reads, in one-letter code: Metallothionein A (60 aa).

A beta region spans residues 1–28 (MDPCECSKTGKCNCGTSCTCTNCSCKCC). A divalent metal cation-binding residues include Cys4, Cys6, Cys12, Cys14, Cys18, Cys20, Cys23, Cys25, Cys28, Cys32, Cys33, Cys35, Cys36, Cys40, Cys43, Cys47, Cys49, Cys54, Cys58, and Cys59. Positions 29 to 60 (KKSCCSCCPSGCSKCASGCVCKGNSCDKSCCQ) are alpha.

This sequence belongs to the metallothionein superfamily. Type 1 family.

Functionally, metallothioneins have a high content of cysteine residues that bind various heavy metals. The chain is Metallothionein A (mta) from Cyprinodon sp. (Pupfish).